A 278-amino-acid chain; its full sequence is MREGWFTEAVEDEGVAFSLAIDERVHEEQSEYQHIEVYRTRRWGRLLVLDGCVMLTERDEFLYHEMMAHPALFAHREPRRVAIVGGGDCGILREVLRHPGVEHTLQVELDERVTRVAETHFPDLCTANDDERAELRFTDGLRWIREAEPESLDVVIVDSTDPVGPAAGLFTKEFLTDVRSALGPGGIVVQQSESPLLHRDSVIAPLHRAASEAGFDGVHTLTFPVPSYPSGWWSATLMVNGGDPRNFREADSEEKPFETRYYNADIHRAALAVPELLK.

The PABS domain occupies 3–240 (EGWFTEAVED…GWWSATLMVN (238 aa)). Residue Gln33 coordinates S-methyl-5'-thioadenosine. His64 and Asp88 together coordinate spermidine. S-methyl-5'-thioadenosine contacts are provided by residues Glu108 and 139–140 (DG). The active-site Proton acceptor is Asp158. 158–161 (DSTD) contributes to the spermidine binding site. Pro165 contributes to the S-methyl-5'-thioadenosine binding site.

The protein belongs to the spermidine/spermine synthase family. Homodimer or homotetramer.

The protein resides in the cytoplasm. The catalysed reaction is S-adenosyl 3-(methylsulfanyl)propylamine + putrescine = S-methyl-5'-thioadenosine + spermidine + H(+). The protein operates within amine and polyamine biosynthesis; spermidine biosynthesis; spermidine from putrescine: step 1/1. Functionally, catalyzes the irreversible transfer of a propylamine group from the amino donor S-adenosylmethioninamine (decarboxy-AdoMet) to putrescine (1,4-diaminobutane) to yield spermidine. This chain is Polyamine aminopropyltransferase, found in Halorhodospira halophila (strain DSM 244 / SL1) (Ectothiorhodospira halophila (strain DSM 244 / SL1)).